Here is a 239-residue protein sequence, read N- to C-terminus: Large ribosomal subunit protein uL1 (239 aa).

Belongs to the universal ribosomal protein uL1 family. As to quaternary structure, part of the 50S ribosomal subunit.

Binds directly to 23S rRNA. The L1 stalk is quite mobile in the ribosome, and is involved in E site tRNA release. Its function is as follows. Protein L1 is also a translational repressor protein, it controls the translation of the L11 operon by binding to its mRNA. The chain is Large ribosomal subunit protein uL1 from Rickettsia africae (strain ESF-5).